A 421-amino-acid polypeptide reads, in one-letter code: MASSSVPPATAPAAAGGPGPGFGFASKTKKKHFVQQKVKVFRAADPLVGVFLWGVAHSINELSQVPPPVMLLPDDFKASSKIKVNNHFFHRENLPSHFKFKEYCPQVFRNLRDRFAIDDHDYLVSLTRSPPSETEGSDGRFLISYDRTLVIKEVSSEDIADMHSNLSNYHQYIVKCHGNTLLPQFLGMYRVSVENEDSYMLVMRNMFSHRLPVHRKYDLKGSLVSREASDKEKVKELPTLKDMDFLNKNQKVYIGEEEKKVFLEKLKRDVEFLVQLKIMDYSLLLGIHDIIRGSEPEEEGPVREEESEWDGDCNLAGPPALVGSYGTSPEGIGGYIHSHRPLGPGEFESFIDVYAIRSAEGAPQKEVYFMGLIDILTQYDAKKKAAHAAKTVKHGAGAEISTVHPEQYAKRFLDFIANIFA.

The residue at position 2 (alanine 2) is an N-acetylalanine. Position 26 is a phosphoserine (serine 26). The PIPK domain occupies 43 to 420 (AADPLVGVFL…RFLDFIANIF (378 aa)). The segment at 69 to 75 (VMLLPDD) is required for interaction with PIP5K1A. Phosphoserine is present on serine 349.

Interacts with PIP5K1A; the interaction inhibits PIP5K1A kinase activity. Phosphorylated, phosphorylation is induced by EGF.

The protein localises to the endoplasmic reticulum. It is found in the cytoplasm. It catalyses the reaction a 1,2-diacyl-sn-glycero-3-phospho-(1D-myo-inositol-5-phosphate) + ATP = a 1,2-diacyl-sn-glycero-3-phospho-(1D-myo-inositol-4,5-bisphosphate) + ADP + H(+). The catalysed reaction is 1,2-dihexadecanoyl-sn-glycero-3-phospho-(1D-myo-inositol-5-phosphate) + ATP = 1,2-dihexadecanoyl-sn-glycero-3-phospho-(1D-myo-inositol-4,5-bisphosphate) + ADP + H(+). The enzyme catalyses 1,2-dihexadecanoyl-sn-glycero-3-phospho-(1D-myo-inositol-5-phosphate) + GTP = 1,2-dihexadecanoyl-sn-glycero-3-phospho-(1D-myo-inositol-4,5-bisphosphate) + GDP + H(+). Phosphatidylinositol 5-phosphate 4-kinase with low enzymatic activity. May be a GTP sensor, has higher GTP-dependent kinase activity than ATP-dependent kinase activity. PIP4Ks negatively regulate insulin signaling through a catalytic-independent mechanism. They interact with PIP5Ks and suppress PIP5K-mediated PtdIns(4,5)P2 synthesis and insulin-dependent conversion to PtdIns(3,4,5)P3. The chain is Phosphatidylinositol 5-phosphate 4-kinase type-2 gamma from Mus musculus (Mouse).